Reading from the N-terminus, the 331-residue chain is MKQTVYIASPESQQIHVWNLNHEGALTLTQVVDVPGQVQPMVVSPDKRYLYVGVRPEFRVLAYRIAPDDGALTFAAESALPGSPTHISTDHQGQFVFVGSYNAGNVSVTRLEDGLPVGVVDVVEGLDGCHSANISPDNRTLWVPALKQDRICLFMVSDDGHLVAQDPAEVTTVEGAGPRHMVFHPNEQYAYCVNELNSSVDVWELKDPHGNIECVQTLDMMPENFSDTRWAADIHITPDGRHLYACDRTASLITVFSVSEDGSVLSKEGFQPTETQPRGFNVDHSGKYLIAAGQKSHHISVYEIVGEQGLLHEKGRYAVGQGPMWVVVNAH.

N6-acetyllysine is present on lysine 287.

Belongs to the cycloisomerase 2 family.

It catalyses the reaction 6-phospho-D-glucono-1,5-lactone + H2O = 6-phospho-D-gluconate + H(+). It participates in carbohydrate degradation; pentose phosphate pathway; D-ribulose 5-phosphate from D-glucose 6-phosphate (oxidative stage): step 2/3. In terms of biological role, catalyzes the hydrolysis of 6-phosphogluconolactone to 6-phosphogluconate. The protein is 6-phosphogluconolactonase of Escherichia coli O8 (strain IAI1).